The primary structure comprises 189 residues: Elongation factor P (189 aa).

This sequence belongs to the elongation factor P family.

The protein resides in the cytoplasm. It participates in protein biosynthesis; polypeptide chain elongation. Its function is as follows. Involved in peptide bond synthesis. Stimulates efficient translation and peptide-bond synthesis on native or reconstituted 70S ribosomes in vitro. Probably functions indirectly by altering the affinity of the ribosome for aminoacyl-tRNA, thus increasing their reactivity as acceptors for peptidyl transferase. The protein is Elongation factor P of Pseudomonas savastanoi pv. phaseolicola (strain 1448A / Race 6) (Pseudomonas syringae pv. phaseolicola (strain 1448A / Race 6)).